A 684-amino-acid chain; its full sequence is Sec1 family domain-containing protein 2 (684 aa).

It belongs to the STXBP/unc-18/SEC1 family.

Its function is as follows. May be involved in protein transport. This is Sec1 family domain-containing protein 2 (Scfd2) from Mus musculus (Mouse).